Reading from the N-terminus, the 170-residue chain is UPF0201 protein MJ1564 (170 aa).

Positions 133-148 (NEDELEEEEEKEDSEE) are enriched in acidic residues. Positions 133–170 (NEDELEEEEEKEDSEEIKEGHKEENNLKIKVIDNSSGD) are disordered. The span at 149-163 (IKEGHKEENNLKIKV) shows a compositional bias: basic and acidic residues.

Belongs to the UPF0201 family.

The sequence is that of UPF0201 protein MJ1564 from Methanocaldococcus jannaschii (strain ATCC 43067 / DSM 2661 / JAL-1 / JCM 10045 / NBRC 100440) (Methanococcus jannaschii).